Reading from the N-terminus, the 542-residue chain is Probable quinate permease (542 aa).

Residues 1–22 are Cytoplasmic-facing; that stretch reads MSILALVEDRPTPKEVYNWRIY. Residues 23–43 traverse the membrane as a helical segment; sequence LLAAVASFTSCMIGYDSAFIG. Topologically, residues 44–66 are extracellular; sequence TTLALSSFREEFGFNTMSKTAVN. A helical transmembrane segment spans residues 67–87; that stretch reads LVSANIVSCYQAGAFFGAFLA. The Cytoplasmic portion of the chain corresponds to 88–97; the sequence is YPVGHFWGRK. The chain crosses the membrane as a helical span at residues 98-118; it reads WGLLFSGAIFTLGAGLMLGAD. Over 119–130 the chain is Extracellular; sequence GDRGLGLLYGGR. The chain crosses the membrane as a helical span at residues 131-151; sequence VLAGLGVGAGSNITPIYISEM. Over 152–159 the chain is Cytoplasmic; it reads APPSIRGR. The chain crosses the membrane as a helical span at residues 160 to 180; it reads LVGVYELGWQIGGLVGFWINY. The Extracellular portion of the chain corresponds to 181–193; sequence GVSETLAPSHKQW. A helical membrane pass occupies residues 194 to 214; the sequence is IIPFAVQLIPSGLLLIGAVFL. Topologically, residues 215 to 285 are cytoplasmic; that stretch reads KESPRWLFSR…AGTNKKVMYR (71 aa). The helical transmembrane segment at 286 to 306 threads the bilayer; the sequence is LFLGSMLFFWQNGSGINAINY. Residues 307-325 lie on the Extracellular side of the membrane; that stretch reads YSPTVFKSIGLQGANTSMF. The chain crosses the membrane as a helical span at residues 326–346; it reads STGIFGVVKTVVTFVWLLYLI. The Cytoplasmic portion of the chain corresponds to 347-352; the sequence is DRLGRR. The helical transmembrane segment at 353–373 threads the bilayer; the sequence is LLLLIGAAGASVCLFIVGAYI. Topologically, residues 374-387 are extracellular; it reads KIADPASNPTQEMT. The chain crosses the membrane as a helical span at residues 388 to 408; that stretch reads GGGIAAMFFFYLYTVFYTPSW. The Cytoplasmic portion of the chain corresponds to 409-456; sequence NGTPWVMNSEMFEPNMRSLAQACAAASNWFWNFLISRFTPQMFAKMEY. The chain crosses the membrane as a helical span at residues 457–477; sequence GVWFFFASLMVLSIVFVFFLL. The Extracellular segment spans residues 478–542; it reads PETKGIPLES…EHLSEDLPKV (65 aa). Residues 519-542 form a disordered region; that stretch reads IEESGYSKTGDQQVEHLSEDLPKV. The segment covering 531–542 has biased composition (basic and acidic residues); it reads QVEHLSEDLPKV.

It belongs to the major facilitator superfamily. Sugar transporter (TC 2.A.1.1) family. Interacts with creB. Ubiquitinated. Deubiquitinated by creB, probably to control its activity or amount.

Its subcellular location is the cell membrane. Its function is as follows. Integral membrane transporter that imports quinic acid to be catabolized as a carbon source. The polypeptide is Probable quinate permease (qutD) (Neosartorya fischeri (strain ATCC 1020 / DSM 3700 / CBS 544.65 / FGSC A1164 / JCM 1740 / NRRL 181 / WB 181) (Aspergillus fischerianus)).